Here is a 312-residue protein sequence, read N- to C-terminus: Olfactory receptor 6N1 (312 aa).

The Extracellular segment spans residues 1–25 (MDTGNWSQVAEFIILGFPHLQGVQI). The N-linked (GlcNAc...) asparagine glycan is linked to Asn-5. A helical transmembrane segment spans residues 26-46 (YLFLLLLLIYLMTVLGNLLIF). Residues 47–54 (LVVCLDSR) are Cytoplasmic-facing. Residues 55–75 (LHTPMYHFVSILSFSELGYTA) form a helical membrane-spanning segment. Residues 76–99 (ATIPKMLANLLSEKKTISFSGCLL) are Extracellular-facing. Cys-97 and Cys-189 form a disulfide bridge. The helical transmembrane segment at 100-120 (QIYFFHSLGATECYLLTAMAY) threads the bilayer. Topologically, residues 121-139 (DRYLAICRPLHYPTLMTPT) are cytoplasmic. A helical transmembrane segment spans residues 140-160 (LCAEIAIGCWLGGLAGPVVEI). Topologically, residues 161–197 (SLISRLPFCGPNRIQHVFCDFPPVLSLACTDTSINVL) are extracellular. The helical transmembrane segment at 198 to 217 (VDFVINSCKILATFLLILCS) threads the bilayer. Over 218–237 (YVQIICTVLRIPSAAGKRKA) the chain is Cytoplasmic. Residues 238–258 (ISTCASHFTVVLIFYGSILSM) traverse the membrane as a helical segment. Residues 259-271 (YVQLKKSYSLDYD) lie on the Extracellular side of the membrane. Residues 272 to 292 (QALAVVYSVLTPFLNPFIYSL) traverse the membrane as a helical segment. At 293–312 (RNKEIKEAVRRQLKRIGILA) the chain is on the cytoplasmic side.

Belongs to the G-protein coupled receptor 1 family.

The protein resides in the cell membrane. In terms of biological role, odorant receptor. In Homo sapiens (Human), this protein is Olfactory receptor 6N1 (OR6N1).